Consider the following 347-residue polypeptide: Transcription factor JunB (347 aa).

Glycyl lysine isopeptide (Lys-Gly) (interchain with G-Cter in SUMO2) cross-links involve residues Lys-4, Lys-33, and Lys-36. The interval 51-73 is disordered; it reads KAPGARGPGPEGGGGGSYFSGQG. Positions 56–68 are enriched in gly residues; sequence RGPGPEGGGGGSY. Lys-81 is covalently cross-linked (Glycyl lysine isopeptide (Lys-Gly) (interchain with G-Cter in SUMO2)). A phosphothreonine mark is found at Thr-102 and Thr-104. A Phosphoserine modification is found at Ser-117. A Glycyl lysine isopeptide (Lys-Gly) (interchain with G-Cter in SUMO2) cross-link involves residue Lys-141. Residues 239 to 253 are compositionally biased toward basic and acidic residues; it reads FKEEPQTVPEARSRD. The disordered stretch occupies residues 239–260; the sequence is FKEEPQTVPEARSRDATPPVSP. The residue at position 240 (Lys-240) is an N6-acetyllysine; alternate. A Glycyl lysine isopeptide (Lys-Gly) (interchain with G-Cter in SUMO1); alternate cross-link involves residue Lys-240. Lys-240 participates in a covalent cross-link: Glycyl lysine isopeptide (Lys-Gly) (interchain with G-Cter in SUMO2); alternate. Ser-251 is modified (phosphoserine). Thr-255 carries the phosphothreonine modification. Phosphoserine is present on Ser-259. The segment at 268 to 295 is basic motif; sequence RIKVERKRLRNRLAATKCRKRKLERIAR. In terms of domain architecture, bZIP spans 268–331; the sequence is RIKVERKRLR…AQLKQKVMTH (64 aa). The segment at 296–324 is leucine-zipper; sequence LEDKVKTLKAENAGLSSTAGLLREQVAQL. Residue Lys-343 forms a Glycyl lysine isopeptide (Lys-Gly) (interchain with G-Cter in SUMO2) linkage.

Belongs to the bZIP family. Jun subfamily. Binds DNA as a homodimer or as a heterodimer with another member of the Jun/Fos family. Component of an AP-1 transcription factor complex composed of JUN-FOS heterodimers composed of JUN-FOS heterodimers. As part of the AP-1 transcription factor complex, forms heterodimers with FOSB, thereby binding to the AP-1 consensus sequence and stimulating transcription. Interacts with ITCH (via its WW domains). Post-translationally, ubiquitinated by ITCH, leading to its degradation.

The protein resides in the nucleus. Its function is as follows. Transcription factor involved in regulating gene activity following the primary growth factor response. Binds to the DNA sequence 5'-TGA[GC]TCA-3'. Heterodimerizes with proteins of the FOS family to form an AP-1 transcription complex, thereby enhancing its DNA binding activity to an AP-1 consensus sequence and its transcriptional activity. This Homo sapiens (Human) protein is Transcription factor JunB (JUNB).